The following is a 217-amino-acid chain: Probable glutathione S-transferase DHAR4 (217 aa).

Glutathione contacts are provided by Lys-8 and Asp-19. L-ascorbate contacts are provided by Lys-8 and Asp-19. One can recognise a GST N-terminal domain in the interval 10 to 85 (ASGAPDVLGD…DLIVGIIEEK (76 aa)). The active-site Nucleophile is Cys-20. The short motif at 20-25 (CPFGQR) is the Glutathione-binding element. The glutathione site is built by Lys-47, Ser-75, His-164, and Trp-211. One can recognise a GST C-terminal domain in the interval 86-217 (YPEPSLVTFP…IASWAPKLDV (132 aa)). Lys-214 lines the L-ascorbate pocket.

This sequence belongs to the GST superfamily. DHAR family. Monomer.

It is found in the cytoplasm. The protein localises to the cytosol. The enzyme catalyses RX + glutathione = an S-substituted glutathione + a halide anion + H(+). It catalyses the reaction L-dehydroascorbate + 2 glutathione = glutathione disulfide + L-ascorbate. In terms of biological role, exhibits glutathione-dependent thiol transferase and dehydroascorbate (DHA) reductase activities. In Arabidopsis thaliana (Mouse-ear cress), this protein is Probable glutathione S-transferase DHAR4 (DHAR4).